The primary structure comprises 84 residues: Putative membrane protein insertion efficiency factor (84 aa).

This sequence belongs to the UPF0161 family.

It is found in the cell inner membrane. Functionally, could be involved in insertion of integral membrane proteins into the membrane. The chain is Putative membrane protein insertion efficiency factor from Shewanella oneidensis (strain ATCC 700550 / JCM 31522 / CIP 106686 / LMG 19005 / NCIMB 14063 / MR-1).